The chain runs to 124 residues: Large ribosomal subunit protein bL12 (124 aa).

Belongs to the bacterial ribosomal protein bL12 family. Homodimer. Part of the ribosomal stalk of the 50S ribosomal subunit. Forms a multimeric L10(L12)X complex, where L10 forms an elongated spine to which 2 to 4 L12 dimers bind in a sequential fashion. Binds GTP-bound translation factors.

Functionally, forms part of the ribosomal stalk which helps the ribosome interact with GTP-bound translation factors. Is thus essential for accurate translation. The protein is Large ribosomal subunit protein bL12 of Bacteroides thetaiotaomicron (strain ATCC 29148 / DSM 2079 / JCM 5827 / CCUG 10774 / NCTC 10582 / VPI-5482 / E50).